A 472-amino-acid chain; its full sequence is Citrate synthase, mitochondrial (472 aa).

Active-site residues include His-308, His-354, and Asp-409.

The protein belongs to the citrate synthase family. As to quaternary structure, homodimer.

The protein resides in the mitochondrion matrix. It catalyses the reaction oxaloacetate + acetyl-CoA + H2O = citrate + CoA + H(+). It participates in carbohydrate metabolism; tricarboxylic acid cycle; isocitrate from oxaloacetate: step 1/2. The sequence is that of Citrate synthase, mitochondrial (CS) from Daucus carota (Wild carrot).